The sequence spans 497 residues: MELVVKSVAAVSVKTATLVVPVGEGRKLGATAKAVDLASEGAISAVLKRGDLAGKPGQTLLLHSVPGLKAERVLLVGSGKDEALGDRAWRKLAASVAGVLKGLGGSDAVLALDDIAVTGRDGHYGKYRLLAETLLDSDYVFDRYKSQKAEPRALKKITLLADKAGLAEAERAVKHASAIATGMAFTRDLGNLPPNVCHPSFLAEQAKGLGKAHKGLKVEVLDEKKIKELGMGAFYAVGQGSDQPPRLIVLNYQGGKKSEKPFVLVGKGITFDTGGISLKPGAGMDEMKYDMCGAASVFGTLRAVLELQLPINLVCLLACAENMPSGGATRPGDIVTTMSGQTVEILNTDAEGRLVLCDTLTYAERFKPQAVIDIATLTGACIVALGSHTSGLMGNNDELVGQLLDAGKRADDRAWQLPLFDEYQEQLDSPFADIANIGGPKAGTITAGCFLSRFAKAYNWAHLDIAGTAWISGGKDKGASGRPVPLLTQYLLDRAGA.

Mn(2+) is bound by residues lysine 267 and aspartate 272. Residue lysine 279 is part of the active site. 3 residues coordinate Mn(2+): aspartate 290, aspartate 349, and glutamate 351. Arginine 353 is an active-site residue.

This sequence belongs to the peptidase M17 family. Requires Mn(2+) as cofactor.

It localises to the cytoplasm. The catalysed reaction is Release of an N-terminal amino acid, Xaa-|-Yaa-, in which Xaa is preferably Leu, but may be other amino acids including Pro although not Arg or Lys, and Yaa may be Pro. Amino acid amides and methyl esters are also readily hydrolyzed, but rates on arylamides are exceedingly low.. The enzyme catalyses Release of an N-terminal amino acid, preferentially leucine, but not glutamic or aspartic acids.. Presumably involved in the processing and regular turnover of intracellular proteins. Catalyzes the removal of unsubstituted N-terminal amino acids from various peptides. This chain is Probable cytosol aminopeptidase, found in Pseudomonas entomophila (strain L48).